Reading from the N-terminus, the 321-residue chain is Phospho-N-acetylmuramoyl-pentapeptide-transferase (321 aa).

The next 10 membrane-spanning stretches (helical) occupy residues 4–24, 51–71, 75–95, 109–129, 139–159, 173–193, 195–215, 222–242, 247–267, and 297–317; these read MVWA…WLIP, TMGG…TVGF, SGVL…DDYI, QKFT…VYGI, GFEV…LLIV, GLAA…ASAG, SDVT…FLFF, MFMG…LALL, LILP…ILQV, and VVYT…LLAM.

The protein belongs to the glycosyltransferase 4 family. MraY subfamily. Mg(2+) is required as a cofactor.

It localises to the cell membrane. It catalyses the reaction UDP-N-acetyl-alpha-D-muramoyl-L-alanyl-gamma-D-glutamyl-meso-2,6-diaminopimeloyl-D-alanyl-D-alanine + di-trans,octa-cis-undecaprenyl phosphate = di-trans,octa-cis-undecaprenyl diphospho-N-acetyl-alpha-D-muramoyl-L-alanyl-D-glutamyl-meso-2,6-diaminopimeloyl-D-alanyl-D-alanine + UMP. Its pathway is cell wall biogenesis; peptidoglycan biosynthesis. Catalyzes the initial step of the lipid cycle reactions in the biosynthesis of the cell wall peptidoglycan: transfers peptidoglycan precursor phospho-MurNAc-pentapeptide from UDP-MurNAc-pentapeptide onto the lipid carrier undecaprenyl phosphate, yielding undecaprenyl-pyrophosphoryl-MurNAc-pentapeptide, known as lipid I. This chain is Phospho-N-acetylmuramoyl-pentapeptide-transferase, found in Heliobacterium modesticaldum (strain ATCC 51547 / Ice1).